Reading from the N-terminus, the 370-residue chain is MRVIFSGGGTGGHIYPIMALIERLKERKLVTNDEILFVGTDRGLESKIVPAAGVPFKTLKIKGFDRKHPLKNFETIELFIKATKEAKQIIKNFKPDVVVGTGGYVSGAIVYEAAKMHVPTIIHESNSVVGLANKFLAHYVDKICYTFDDAAKQFSEKKKLVKTGNPRSQQVLGLNKENIDIAKKWDLNPNMPTVLIFGGSRGALAINQIVEKSLSELETKPYQVIWATGQLYYGDVKKKLAGKEVNSNIKIVPYIDNMPGLLPQMTCVVARSGATSLAEFTALGVPVILIPSPNVTHNHQMKNALDMEKAGAALVIAENDLNPNNFVSSIDHILLDTNYAKKMSEASKKLGVPDASDQVISVMESLIKNK.

UDP-N-acetyl-alpha-D-glucosamine contacts are provided by residues 10–12 (TGG), N126, S200, I255, and Q300.

The protein belongs to the glycosyltransferase 28 family. MurG subfamily.

It localises to the cell membrane. It catalyses the reaction Mur2Ac(oyl-L-Ala-gamma-D-Glu-L-Lys-D-Ala-D-Ala)-di-trans,octa-cis-undecaprenyl diphosphate + UDP-N-acetyl-alpha-D-glucosamine = beta-D-GlcNAc-(1-&gt;4)-Mur2Ac(oyl-L-Ala-gamma-D-Glu-L-Lys-D-Ala-D-Ala)-di-trans,octa-cis-undecaprenyl diphosphate + UDP + H(+). It participates in cell wall biogenesis; peptidoglycan biosynthesis. In terms of biological role, cell wall formation. Catalyzes the transfer of a GlcNAc subunit on undecaprenyl-pyrophosphoryl-MurNAc-pentapeptide (lipid intermediate I) to form undecaprenyl-pyrophosphoryl-MurNAc-(pentapeptide)GlcNAc (lipid intermediate II). The protein is UDP-N-acetylglucosamine--N-acetylmuramyl-(pentapeptide) pyrophosphoryl-undecaprenol N-acetylglucosamine transferase of Lactobacillus johnsonii (strain CNCM I-12250 / La1 / NCC 533).